Consider the following 185-residue polypeptide: MTKEIIKDAEERMKKAVEVFRQELAGMRANRATPALLDKVRVEAYGSEVPVNNVATIEVPDPRTLVIKPWDRSLIKAIERAINASDLGLNPTNDGQVIRLSIPPMTEERRRELVKVVAKRTEEQRVAIRNIRRDANEQIKKLEKDKAVSEDESKRAQDEVQKLTDKYIKEVDQLMAAKEKEIMEV.

The protein belongs to the RRF family.

It localises to the cytoplasm. Functionally, responsible for the release of ribosomes from messenger RNA at the termination of protein biosynthesis. May increase the efficiency of translation by recycling ribosomes from one round of translation to another. The chain is Ribosome-recycling factor from Symbiobacterium thermophilum (strain DSM 24528 / JCM 14929 / IAM 14863 / T).